The chain runs to 209 residues: Protein GrpE (209 aa).

The tract at residues Met-1–Asn-63 is disordered. 2 stretches are compositionally biased toward basic and acidic residues: residues Lys-7–Pro-42 and Glu-50–Asn-63.

It belongs to the GrpE family. In terms of assembly, homodimer.

It is found in the cytoplasm. Participates actively in the response to hyperosmotic and heat shock by preventing the aggregation of stress-denatured proteins, in association with DnaK and GrpE. It is the nucleotide exchange factor for DnaK and may function as a thermosensor. Unfolded proteins bind initially to DnaJ; upon interaction with the DnaJ-bound protein, DnaK hydrolyzes its bound ATP, resulting in the formation of a stable complex. GrpE releases ADP from DnaK; ATP binding to DnaK triggers the release of the substrate protein, thus completing the reaction cycle. Several rounds of ATP-dependent interactions between DnaJ, DnaK and GrpE are required for fully efficient folding. This chain is Protein GrpE, found in Methanosarcina mazei (strain ATCC BAA-159 / DSM 3647 / Goe1 / Go1 / JCM 11833 / OCM 88) (Methanosarcina frisia).